Reading from the N-terminus, the 541-residue chain is Chaperonin GroEL 2 (541 aa).

ATP contacts are provided by residues 29-32, 86-90, glycine 413, 476-478, and aspartate 492; these read TLGP, DGTTT, and NAA.

This sequence belongs to the chaperonin (HSP60) family. In terms of assembly, forms a cylinder of 14 subunits composed of two heptameric rings stacked back-to-back. Interacts with the co-chaperonin GroES.

The protein localises to the secreted. The protein resides in the capsule. It localises to the cell surface. Its subcellular location is the cell wall. The catalysed reaction is ATP + H2O + a folded polypeptide = ADP + phosphate + an unfolded polypeptide.. Together with its co-chaperonin GroES, plays an essential role in assisting protein folding. The GroEL-GroES system forms a nano-cage that allows encapsulation of the non-native substrate proteins and provides a physical environment optimized to promote and accelerate protein folding. This is Chaperonin GroEL 2 from Mycobacterium avium (strain 104).